The chain runs to 902 residues: Chloride channel protein 2 (902 aa).

At 1–89 (MAASAAAAGE…RCHKFLVSRV (89 aa)) the chain is on the cytoplasmic side. The essential for channel gating by both voltage and cell volume stretch occupies residues 18-36 (QYEQTLMYGRYTQELGAFA). Thr-22 carries the phosphothreonine modification. The modulates channel gating by both voltage and cell volume stretch occupies residues 38–51 (EEAARIRLGGPEPW). Transmembrane regions (helical) follow at residues 90–123 (GEDWIFLVLLGLLMALVSWAMDYAIAVCLQAQQW) and 132–157 (ILLQYLAWVTYPVVLITFSAGFTQIL). The Selectivity filter part_1 signature appears at 163–167 (GSGIP). The segment at residues 166-173 (IPEMKTIL) is an intramembrane region (helical). The next 2 helical transmembrane spans lie at 182–200 (LTLKTFVAKVIGLTCALGS) and 207–225 (EGPFVHIASMCASLLSKFL). The Selectivity filter part_2 signature appears at 205–209 (GKEGP). 2 consecutive intramembrane regions (helical) follow at residues 241–253 (MLAAACAVGVGCC) and 257–265 (PIGGVLFSI). The next 5 helical transmembrane spans lie at 277–297 (YWRGFFSATFSAFIFRVLAVW), 323–351 (LPAFAVIGIASGFGGALFVYLNRKIVQVM), 360–379 (FLMRKRLLFPALVTLLISTL), 431–451 (ANVFLTLVIFILMKFWMSALA), and 459–482 (GAFMPVFVIGAAFGRLVGESMAAW). The Selectivity filter part_3 motif lies at 459-463 (GAFMP). An intramembrane region (helical) is located at residues 499-513 (GGYAVVGAAALAGAV). Residues 514 to 515 (TH) constitute an intramembrane region (note=Loop between two helices). The helical intramembrane region spans 516–527 (TVSTAVIVFELT). An intramembrane region (note=Loop between two helices) is located at residues 528-532 (GQIAH). The helical transmembrane segment at 533 to 550 (ILPVMIAVILANAVAQSL) threads the bilayer. At 551–902 (QPSLYDSIIR…SPSDSDDKCQ (352 aa)) the chain is on the cytoplasmic side. The region spanning 586–644 (MVRDVPYVALNCTFRDLRLALHRTKGRMLALVESSESMILLGSIERSQVVTLLGAQLSA) is the CBS 1 domain. The tract at residues 648–748 (RQHIQERRKA…TSDLEKPESC (101 aa)) is disordered. 2 stretches are compositionally biased toward polar residues: residues 671 to 683 (PESSVHFQVNTED) and 706 to 719 (SNASKAGETSTGSM). A CBS 2 domain is found at 794–854 (IDPAPFQLVE…GSVTAQGVKV (61 aa)). Residues 816 to 817 (LL) carry the Basolateral membrane sorting motif. The segment at 860 to 902 (SFRDSATSSSDTETTEVHALWGPHSCHGLPRDGSPSDSDDKCQ) is disordered.

The protein belongs to the chloride channel (TC 2.A.49) family. ClC-2/CLCN2 subfamily. Homodimer. Interacts with auxiliary subunit HEPACAM.

The protein resides in the cell membrane. It is found in the basolateral cell membrane. Its subcellular location is the cell projection. The protein localises to the dendritic spine membrane. It localises to the axon. The catalysed reaction is chloride(in) = chloride(out). It carries out the reaction thiocyanate(in) = thiocyanate(out). The enzyme catalyses bromide(in) = bromide(out). It catalyses the reaction nitrate(in) = nitrate(out). The catalysed reaction is iodide(out) = iodide(in). Common gate kinetics are down-regulated by intracellular ATP. Inhibited by AK-42, a derivative of meclofenamate. Inhibited by Cd(2+). Inhibited by Zn(2+) and PKC activation. Inhibited at acidic pH. CCLN2:HEPACAM channel conductance is up-regulated upon hypo-osmolarity. Functionally, voltage-gated and osmosensitive chloride channel. Forms a homodimeric channel where each subunit has its own ion conduction pathway. Conducts double-barreled currents controlled by two types of gates, two fast glutamate gates that control each subunit independently and a slow common gate that opens and shuts off both subunits simultaneously. Displays inward rectification currents activated upon membrane hyperpolarization and extracellular hypotonicity. Contributes to chloride conductance involved in neuron excitability. In hippocampal neurons, generates a significant part of resting membrane conductance and provides an additional chloride efflux pathway to prevent chloride accumulation in dendrites upon GABA receptor activation. In glia, associates with the auxiliary subunit HEPACAM/GlialCAM at astrocytic processes and myelinated fiber tracts where it may regulate transcellular chloride flux buffering extracellular chloride and potassium concentrations. Regulates aldosterone production in adrenal glands. The opening of CLCN2 channels at hyperpolarized membrane potentials in the glomerulosa causes cell membrane depolarization, activation of voltage-gated calcium channels and increased expression of aldosterone synthase, the rate-limiting enzyme for aldosterone biosynthesis. Contributes to chloride conductance in retinal pigment epithelium involved in phagocytosis of shed photoreceptor outer segments and photoreceptor renewal. Conducts chloride currents at the basolateral membrane of epithelial cells with a role in chloride reabsorption rather than secretion. Permeable to small monovalent anions with chloride &gt; thiocyanate &gt; bromide &gt; nitrate &gt; iodide ion selectivity. The protein is Chloride channel protein 2 (CLCN2) of Cavia porcellus (Guinea pig).